Reading from the N-terminus, the 696-residue chain is DNA topoisomerase 6 subunit B (696 aa).

Positions 1–36 (MDDDAGDGAASGGTKRKVTAASSSAAAKGKAAGKGK) are disordered. A compositionally biased stretch (low complexity) spans 20-36 (AASSSAAAKGKAAGKGK). Residues Asn88, Asp187, 208 to 209 (TK), 217 to 224 (GKFGLGAK), and Lys543 contribute to the ATP site.

The protein belongs to the TOP6B family. As to quaternary structure, homodimer. Heterotetramer of two TOP6A and two TOP6B subunits. Interacts with SPO11-4.

The protein resides in the nucleus. It carries out the reaction ATP-dependent breakage, passage and rejoining of double-stranded DNA.. Component of the DNA topoisomerase VI involved in chromatin organization and progression of endoreduplication cycles. Relaxes both positive and negative superturns and exhibits a strong decatenase activity. The B subunit binds ATP. The chain is DNA topoisomerase 6 subunit B (TOP6B) from Oryza sativa subsp. japonica (Rice).